The following is a 740-amino-acid chain: Dynein regulatory complex protein 1 (740 aa).

Residues 101-388 (IDIREIHRRV…QFKELQKAMR (288 aa)) adopt a coiled-coil conformation. The interval 570 to 617 (ASMEKASMEETSTRSELELAEQTEMEGEKEESLVEGEKEEEEETPPSP) is disordered. Residues 575–586 (ASMEETSTRSEL) are compositionally biased toward basic and acidic residues. A compositionally biased stretch (acidic residues) spans 587 to 598 (ELAEQTEMEGEK). Residues 691–724 (LTQRAKLLLENSSLEQQNTELQALLQQYLNSKIN) adopt a coiled-coil conformation.

Belongs to the DRC1 family. Component of the nexin-dynein regulatory complex (N-DRC). Interacts with CCDC65/DRC2, DRC3, GAS8/DRC4 and TCTE1/DRC5.

It is found in the cytoplasm. The protein resides in the cytoskeleton. Its subcellular location is the cilium axoneme. The protein localises to the flagellum axoneme. Functionally, component of the nexin-dynein regulatory complex (N-DRC) a key regulator of ciliary/flagellar motility which maintains the alignment and integrity of the distal axoneme and regulates microtubule sliding in motile axonemes. Plays a critical role in the assembly of N-DRC and also stabilizes the assembly of multiple inner dynein arms and radial spokes. Coassembles with CCDC65/DRC2 to form a central scaffold needed for assembly of the N-DRC and its attachment to the outer doublet microtubules. This is Dynein regulatory complex protein 1 (DRC1) from Homo sapiens (Human).